Consider the following 180-residue polypeptide: Ribulose bisphosphate carboxylase small subunit, chloroplastic 1 (180 aa).

A chloroplast-targeting transit peptide spans 1-56 (MASSVISSAAVATRTNVAQASMVAPFNGLKSAVSFPVSSKQNLDITSIASNGGRVQ).

This sequence belongs to the RuBisCO small chain family. In terms of assembly, heterohexadecamer of 8 large and 8 small subunits.

The protein localises to the plastid. It localises to the chloroplast. RuBisCO catalyzes two reactions: the carboxylation of D-ribulose 1,5-bisphosphate, the primary event in carbon dioxide fixation, as well as the oxidative fragmentation of the pentose substrate. Both reactions occur simultaneously and in competition at the same active site. Although the small subunit is not catalytic it is essential for maximal activity. The chain is Ribulose bisphosphate carboxylase small subunit, chloroplastic 1 from Petunia hybrida (Petunia).